A 606-amino-acid chain; its full sequence is Glutamine--fructose-6-phosphate aminotransferase [isomerizing] (606 aa).

Catalysis depends on Cys2, which acts as the Nucleophile; for GATase activity. Residues 2–218 (CGIFGYLGEK…SGELAVLRIG (217 aa)) form the Glutamine amidotransferase type-2 domain. SIS domains are found at residues 278–424 (FTES…HRQV) and 448–596 (LDSS…VDRP). The For Fru-6P isomerization activity role is filled by Lys601.

As to quaternary structure, homodimer.

The protein resides in the cytoplasm. It catalyses the reaction D-fructose 6-phosphate + L-glutamine = D-glucosamine 6-phosphate + L-glutamate. Catalyzes the first step in hexosamine metabolism, converting fructose-6P into glucosamine-6P using glutamine as a nitrogen source. In Chlamydia trachomatis serovar D (strain ATCC VR-885 / DSM 19411 / UW-3/Cx), this protein is Glutamine--fructose-6-phosphate aminotransferase [isomerizing].